We begin with the raw amino-acid sequence, 134 residues long: Profilin-1 (134 aa).

A disulfide bond links Cys-13 and Cys-118. The Involved in PIP2 interaction motif lies at 84 to 100; the sequence is AVIRGKKGSGGITIKKT. At Thr-114 the chain carries Phosphothreonine.

Belongs to the profilin family. In terms of assembly, occurs in many kinds of cells as a complex with monomeric actin in a 1:1 ratio. Phosphorylated by MAP kinases.

Its subcellular location is the cytoplasm. The protein localises to the cytoskeleton. Its function is as follows. Binds to actin and affects the structure of the cytoskeleton. At high concentrations, profilin prevents the polymerization of actin, whereas it enhances it at low concentrations. The sequence is that of Profilin-1 from Olea europaea (Common olive).